Reading from the N-terminus, the 214-residue chain is Phosphoheptose isomerase (214 aa).

Positions 51–209 constitute an SIS domain; it reads IASTFEDGGK…IDLVERLLGY (159 aa). 66–68 lines the substrate pocket; it reads NGG. Residues H75 and E79 each contribute to the Zn(2+) site. Residues E79, 110–111, 136–138, S141, and Q189 each bind substrate; these read ND and STS. Zn(2+) contacts are provided by Q189 and H197.

The protein belongs to the SIS family. GmhA subfamily. The cofactor is Zn(2+).

The protein localises to the cytoplasm. It catalyses the reaction 2 D-sedoheptulose 7-phosphate = D-glycero-alpha-D-manno-heptose 7-phosphate + D-glycero-beta-D-manno-heptose 7-phosphate. It participates in carbohydrate biosynthesis; D-glycero-D-manno-heptose 7-phosphate biosynthesis; D-glycero-alpha-D-manno-heptose 7-phosphate and D-glycero-beta-D-manno-heptose 7-phosphate from sedoheptulose 7-phosphate: step 1/1. Catalyzes the isomerization of sedoheptulose 7-phosphate in D-glycero-D-manno-heptose 7-phosphate. The sequence is that of Phosphoheptose isomerase from Chlorobium limicola (strain DSM 245 / NBRC 103803 / 6330).